The chain runs to 300 residues: Probable endonuclease 4 (300 aa).

Zn(2+) is bound by residues His69, His110, Glu145, Asp179, His182, His214, Asp227, His229, and Glu259.

The protein belongs to the AP endonuclease 2 family. Zn(2+) is required as a cofactor.

It carries out the reaction Endonucleolytic cleavage to 5'-phosphooligonucleotide end-products.. Functionally, endonuclease IV plays a role in DNA repair. It cleaves phosphodiester bonds at apurinic or apyrimidinic (AP) sites, generating a 3'-hydroxyl group and a 5'-terminal sugar phosphate. The polypeptide is Probable endonuclease 4 (Lachnoclostridium phytofermentans (strain ATCC 700394 / DSM 18823 / ISDg) (Clostridium phytofermentans)).